Here is a 274-residue protein sequence, read N- to C-terminus: Large ribosomal subunit protein uL2cz/uL2cy (274 aa).

Disordered stretches follow at residues 1–33 (MAIHLYKTSTPSTRKRAVDSQGKSNPRNHLIYG) and 223–265 (MNPV…KYND).

It belongs to the universal ribosomal protein uL2 family. Part of the 50S ribosomal subunit.

It is found in the plastid. Its subcellular location is the chloroplast. This chain is Large ribosomal subunit protein uL2cz/uL2cy (rpl2-A), found in Pelargonium hortorum (Common geranium).